Reading from the N-terminus, the 69-residue chain is Cytochrome c oxidase subunit 8A, mitochondrial (69 aa).

A mitochondrion-targeting transit peptide spans 1–25 (MSVLTPLLLRGLTGSARRLPMPCAR). The short motif at 2 to 19 (SVLTPLLLRGLTGSARRL) is the SIFI-degron element. At 26-36 (VHSKPPREQLG) the chain is on the mitochondrial matrix side. A helical membrane pass occupies residues 37-60 (TMDIAIGLTSCFVCFLLPSGWVLS). Residues 61–69 (HLENYKKRE) are Mitochondrial intermembrane-facing.

This sequence belongs to the cytochrome c oxidase VIII family. In terms of assembly, component of the cytochrome c oxidase (complex IV, CIV), a multisubunit enzyme composed of 14 subunits. The complex is composed of a catalytic core of 3 subunits MT-CO1, MT-CO2 and MT-CO3, encoded in the mitochondrial DNA, and 11 supernumerary subunits COX4I, COX5A, COX5B, COX6A, COX6B, COX6C, COX7A, COX7B, COX7C, COX8 and NDUFA4, which are encoded in the nuclear genome. The complex exists as a monomer or a dimer and forms supercomplexes (SCs) in the inner mitochondrial membrane with NADH-ubiquinone oxidoreductase (complex I, CI) and ubiquinol-cytochrome c oxidoreductase (cytochrome b-c1 complex, complex III, CIII), resulting in different assemblies (supercomplex SCI(1)III(2)IV(1) and megacomplex MCI(2)III(2)IV(2)). In response to mitochondrial stress, the precursor protein is ubiquitinated by the SIFI complex in the cytoplasm before mitochondrial import, leading to its degradation. Within the SIFI complex, UBR4 initiates ubiquitin chain that are further elongated or branched by KCMF1.

Its subcellular location is the mitochondrion inner membrane. The protein operates within energy metabolism; oxidative phosphorylation. Functionally, component of the cytochrome c oxidase, the last enzyme in the mitochondrial electron transport chain which drives oxidative phosphorylation. The respiratory chain contains 3 multisubunit complexes succinate dehydrogenase (complex II, CII), ubiquinol-cytochrome c oxidoreductase (cytochrome b-c1 complex, complex III, CIII) and cytochrome c oxidase (complex IV, CIV), that cooperate to transfer electrons derived from NADH and succinate to molecular oxygen, creating an electrochemical gradient over the inner membrane that drives transmembrane transport and the ATP synthase. Cytochrome c oxidase is the component of the respiratory chain that catalyzes the reduction of oxygen to water. Electrons originating from reduced cytochrome c in the intermembrane space (IMS) are transferred via the dinuclear copper A center (CU(A)) of subunit 2 and heme A of subunit 1 to the active site in subunit 1, a binuclear center (BNC) formed by heme A3 and copper B (CU(B)). The BNC reduces molecular oxygen to 2 water molecules using 4 electrons from cytochrome c in the IMS and 4 protons from the mitochondrial matrix. The sequence is that of Cytochrome c oxidase subunit 8A, mitochondrial (COX8A) from Nycticebus coucang (Slow loris).